Consider the following 541-residue polypeptide: Carotenoid-cleaving dioxygenase, mitochondrial (541 aa).

Fe cation is bound by residues His188, His248, His319, and His535.

The protein belongs to the carotenoid oxygenase family. Fe(2+) serves as cofactor. Widely expressed. Detected in heart, spleen, lung, intestine, colon, stomach, kidney, bladder, and prostate. Highly expressed in liver and testis (at protein level).

It localises to the mitochondrion. It carries out the reaction all-trans-beta-carotene + O2 = beta-ionone + all-trans-10'-apo-beta-carotenal. The catalysed reaction is 5-cis-lycopene + O2 = 5-cis-10'-apo-lycopenal + (3E,5E)-6,10-dimethylundeca-3,5,9-trien-2-one. The enzyme catalyses 13-cis-lycopene + O2 = 13-cis-10'-apo-lycopenal + (3E,5E)-6,10-dimethylundeca-3,5,9-trien-2-one. It catalyses the reaction lutein + O2 = (3R,6R)-hydroxy-alpha-ionone + (3R)-3-hydroxy-10'-apo-beta-carotenal. It carries out the reaction lutein + O2 = (3R,6R)-3-hydroxy-10'-apo-alpha-carotenal + (3R)-hydroxy-beta-ionone. The catalysed reaction is all-trans-zeaxanthin + 2 O2 = 4,9-dimethyldodeca-2,4,6,8,10-pentaenedial + 2 (3R)-hydroxy-beta-ionone. The enzyme catalyses all-trans-zeaxanthin + O2 = (3R)-3-hydroxy-10'-apo-beta-carotenal + (3R)-hydroxy-beta-ionone. It catalyses the reaction beta-cryptoxanthin + O2 = all-trans-10'-apo-beta-carotenal + (3R)-hydroxy-beta-ionone. It carries out the reaction all-trans-10'-apo-beta-carotenal + O2 = beta-ionone + 4,9-dimethyldodeca-2,4,6,8,10-pentaenedial. The catalysed reaction is (3R)-3-hydroxy-10'-apo-beta-carotenal + O2 = 4,9-dimethyldodeca-2,4,6,8,10-pentaenedial + (3R)-hydroxy-beta-ionone. The enzyme catalyses (3R,6R)-3-hydroxy-10'-apo-alpha-carotenal + O2 = (3R,6R)-hydroxy-alpha-ionone + 4,9-dimethyldodeca-2,4,6,8,10-pentaenedial. In terms of biological role, broad specificity mitochondrial dioxygenase that mediates the asymmetric oxidative cleavage of carotenoids. Cleaves carotenes (pure hydrocarbon carotenoids) such as all-trans-beta-carotene and lycopene as well as xanthophylls (oxygenated carotenoids) such as zeaxanthin, lutein and beta-cryptoxanthin at both the 9,10 and the 9',10' carbon-carbon double bond. Through its function in carotenoids metabolism regulates oxidative stress and the production of important signaling molecules. The polypeptide is Carotenoid-cleaving dioxygenase, mitochondrial (Mustela putorius furo (European domestic ferret)).